The primary structure comprises 360 residues: UPF0283 membrane protein Oant_2119 (360 aa).

The tract at residues 1 to 30 (MTEKTPRKPASFTVSQASNRPEAADEAPRR) is disordered. 2 helical membrane passes run 77-97 (ILFG…TEDL) and 108-128 (LGWT…AIVV).

This sequence belongs to the UPF0283 family.

The protein resides in the cell inner membrane. This Brucella anthropi (strain ATCC 49188 / DSM 6882 / CCUG 24695 / JCM 21032 / LMG 3331 / NBRC 15819 / NCTC 12168 / Alc 37) (Ochrobactrum anthropi) protein is UPF0283 membrane protein Oant_2119.